Reading from the N-terminus, the 128-residue chain is MAIPKDMRLKGHRTFNYIHKNSMTYHGKLMTFKVARSNPEILLTHKLTNTSNNFRVAIAISKKVSKKAVERNKLRRILQEWLLTNIQKINNHKPYWLLVNLKFGDFRNDKSKLLEEFQNLMFKSRLIK.

The protein belongs to the RnpA family. In terms of assembly, consists of a catalytic RNA component (M1 or rnpB) and a protein subunit.

It carries out the reaction Endonucleolytic cleavage of RNA, removing 5'-extranucleotides from tRNA precursor.. RNaseP catalyzes the removal of the 5'-leader sequence from pre-tRNA to produce the mature 5'-terminus. It can also cleave other RNA substrates such as 4.5S RNA. The protein component plays an auxiliary but essential role in vivo by binding to the 5'-leader sequence and broadening the substrate specificity of the ribozyme. The sequence is that of Ribonuclease P protein component from Prochlorococcus marinus (strain AS9601).